A 256-amino-acid polypeptide reads, in one-letter code: tRNA (guanine-N(1)-)-methyltransferase (256 aa).

S-adenosyl-L-methionine-binding positions include Gly119 and 139–144; that span reads IGDYVV.

The protein belongs to the RNA methyltransferase TrmD family. Homodimer.

Its subcellular location is the cytoplasm. The enzyme catalyses guanosine(37) in tRNA + S-adenosyl-L-methionine = N(1)-methylguanosine(37) in tRNA + S-adenosyl-L-homocysteine + H(+). In terms of biological role, specifically methylates guanosine-37 in various tRNAs. The protein is tRNA (guanine-N(1)-)-methyltransferase of Nitrosospira multiformis (strain ATCC 25196 / NCIMB 11849 / C 71).